The primary structure comprises 399 residues: Phosphatidate cytidylyltransferase 5, chloroplastic (399 aa).

Residues 1–26 (MAPFVEVCRYKPLPLSLSSLCTCPCR) constitute a chloroplast transit peptide. 6 consecutive transmembrane segments (helical) span residues 123-143 (VGGI…AAVL), 187-207 (FGHI…ALLL), 217-237 (LSST…WVKL), 266-286 (VGLV…TFAF), 309-329 (AFAG…SLSW), and 333-353 (LVST…GDLT).

This sequence belongs to the CDS family. Mg(2+) is required as a cofactor.

The protein resides in the plastid. It localises to the chloroplast membrane. It carries out the reaction a 1,2-diacyl-sn-glycero-3-phosphate + CTP + H(+) = a CDP-1,2-diacyl-sn-glycerol + diphosphate. The protein operates within phospholipid metabolism; CDP-diacylglycerol biosynthesis; CDP-diacylglycerol from sn-glycerol 3-phosphate: step 3/3. With respect to regulation, highest activities is obtained at about 30 mM CTP and 2 mM phosphatidic acid (PA). May be involved in the synthesis of minor phospholipids and in modulation of IP3-mediated signal transduction. Promotes the biosynthesis of plastidial phosphatidylglycerol (PG) which is required for structure and function of thylakoid membranes and, hence, for photoautotrophic growth. This is Phosphatidate cytidylyltransferase 5, chloroplastic from Arabidopsis thaliana (Mouse-ear cress).